Consider the following 144-residue polypeptide: Ethylene-responsive transcription factor ERF019 (144 aa).

The segment at residues 13–72 (KYKGIRRRKWGKWVSEIRVPGTRDRLWLGSFSTAEGAAVAHDVAFFCLHQPDSLESLNFP) is a DNA-binding region (AP2/ERF).

Belongs to the AP2/ERF transcription factor family. ERF subfamily.

Its subcellular location is the nucleus. Probably acts as a transcriptional activator. Binds to the GCC-box pathogenesis-related promoter element. May be involved in the regulation of gene expression by stress factors and by components of stress signal transduction pathways. In Arabidopsis thaliana (Mouse-ear cress), this protein is Ethylene-responsive transcription factor ERF019 (ERF019).